Reading from the N-terminus, the 1069-residue chain is Kinesin-like protein vab-8 (1069 aa).

Positions 15-325 constitute a Kinesin motor domain; sequence PLRTIPKLRL…ACKIARTRVK (311 aa). Disordered regions lie at residues 328–374, 391–436, and 572–598; these read MGHG…LESG, SRTT…KSSP, and EQEEESMRTSTATTGGSKKDHPLRILS. Interaction with unc-51 regions lie at residues 331 to 517 and 517 to 719; these read GRKP…KSKY and YNLD…TVVD. Low complexity-rich tracts occupy residues 339-364 and 391-407; these read SSGTMDSNGSSSSFGTTTITPGGTPR and SRTTSPASTTMPSTPTS. Residues 403-877 form an interaction with unc-73 region; it reads STPTSIRPLH…SAERDRKTSK (475 aa). Residues 719-769 adopt a coiled-coil conformation; sequence DWSQIERKKEREKDAMEEEKRKEVLRERRAKLKITELEIKRERNMIDKELD. The interval 786–960 is disordered; sequence SLSPCRGGRT…RQSYSASSGY (175 aa). The span at 824 to 847 shows a compositional bias: low complexity; sequence GGSLAKLSASGASGSGPPSSPSLG. Basic and acidic residues predominate over residues 883-897; it reads SSKERRSSGSKEELQ. The segment covering 906–928 has biased composition (low complexity); that stretch reads TSPKTYGGPGTSSSGRGSSAPGS. Polar residues predominate over residues 938–960; sequence TEKTANGTMPRSKRQSYSASSGY. The stretch at 990-1027 forms a coiled coil; that stretch reads LVRQADEIRHRQWQLKKELEEAKRAIGQEEDAKMIANS.

This sequence belongs to the TRAFAC class myosin-kinesin ATPase superfamily. Kinesin family. KIF26 subfamily. Interacts with unc-51 and unc-73. In terms of processing, phosphorylated by unc-51.

The protein resides in the cytoplasm. It is found in the cytoskeleton. Its function is as follows. Required for posterior migration of cells and axon growth cones during nervous system assembly. In PLM neuron, regulates innexin unc-9 gap junction turnover by suppressing unc-9 transport out of the gap junctions. In Caenorhabditis briggsae, this protein is Kinesin-like protein vab-8 (vab-8).